The sequence spans 435 residues: MVVNTIYIARHGYRSNWLPEGPYPDPLTGIDSDVPLAEHGVQQAKELAHYLLSLDNQPEAAFASPFYRCLETVQPIAKLLEIPVYLERGIGEWYRPDRKPVIPVPAGYEILSKFFPGVISQEWDSTLTPNEKGETEQEMYMRFKKFWPLFIERVEKEYPNVECILLVTHAASKIALGMSLLGYDNPRMSLNENGDKIRSGSCSLDKYEILKKSYDTIDETDDQTSFTYIPFSDRKWVLTMNGNTEFLSSGEEMNWNFDCVAEAGSDADIKKRQMTKKTSSPIPEADDQTEVETVYISVDIPSGNYKERTEIAKSAILQYSGLETDAPLFRIGNRLYEGSWERLVGTELAFPNAAHVHKKTAGLLSPTEENETTNAGQSKGSSTANDPNIQIQEEDVGLPDSTNTSRDHTGDKEEVQSEKIYRIKERIVLSNVRPM.

Positions G362–S417 are disordered. Residue S365 is modified to Phosphoserine. A compositionally biased stretch (polar residues) spans T372–I391. Basic and acidic residues predominate over residues S405–S417.

Component of the TFIIIC complex composed of TFC1, TFC3, TFC4, TFC6, TFC7 and TFC8. The subunits are organized in two globular domains, tauA and tauB, connected by a proteolysis-sensitive and flexible linker.

The protein resides in the nucleus. In terms of biological role, TFIIIC mediates tRNA and 5S RNA gene activation by binding to intragenic promoter elements. Upstream of the transcription start site, TFIIIC assembles the initiation complex TFIIIB-TFIIIC-tDNA, which is sufficient for RNA polymerase III recruitment and function. Part of the tauA domain of TFIIIC that binds boxA DNA promoter sites of tRNA and similar genes. The polypeptide is Transcription factor tau 55 kDa subunit (TFC7) (Saccharomyces cerevisiae (strain ATCC 204508 / S288c) (Baker's yeast)).